The following is a 278-amino-acid chain: Biotin synthase (278 aa).

The region spanning 1–227 (MQIMLCAISN…QSVVMVAGGR (227 aa)) is the Radical SAM core domain. Cys-16, Cys-20, and Cys-23 together coordinate [4Fe-4S] cluster. Residues Cys-60, Asn-96, and Cys-154 each coordinate [2Fe-2S] cluster.

The protein belongs to the radical SAM superfamily. Biotin synthase family. As to quaternary structure, homodimer. It depends on [4Fe-4S] cluster as a cofactor. Requires [2Fe-2S] cluster as cofactor.

The catalysed reaction is (4R,5S)-dethiobiotin + (sulfur carrier)-SH + 2 reduced [2Fe-2S]-[ferredoxin] + 2 S-adenosyl-L-methionine = (sulfur carrier)-H + biotin + 2 5'-deoxyadenosine + 2 L-methionine + 2 oxidized [2Fe-2S]-[ferredoxin]. It functions in the pathway cofactor biosynthesis; biotin biosynthesis; biotin from 7,8-diaminononanoate: step 2/2. Catalyzes the conversion of dethiobiotin (DTB) to biotin by the insertion of a sulfur atom into dethiobiotin via a radical-based mechanism. This is Biotin synthase from Campylobacter jejuni subsp. jejuni serotype O:2 (strain ATCC 700819 / NCTC 11168).